A 759-amino-acid polypeptide reads, in one-letter code: Serine/threonine-protein kinase HRK1 (759 aa).

The segment at 1–32 (MPNLLSRNPFHGHHNDHHHDRENSSNNPPQLI) is disordered. At Ser37 the chain carries Phosphoserine. Residues 45 to 162 (KQSNDSLRSE…PPPSKSTSTV (118 aa)) are disordered. The segment covering 59-97 (SMKSTTTTTNYTTTNLNNNTHSHSNATSISTNNYNNNYE) has biased composition (low complexity). Positions 113–122 (SPASPKQTHS) are enriched in polar residues. A Protein kinase domain is found at 215–722 (GKLGKLLGSG…LDDIFNDEWF (508 aa)). ATP contacts are provided by residues 221–229 (LGSGAGGSV) and Lys244. Asp340 functions as the Proton acceptor in the catalytic mechanism. Residues Ser382 and Ser472 each carry the phosphoserine modification. Polar residues predominate over residues 493–502 (PNTPASIQGK). Disordered regions lie at residues 493–578 (PNTP…GRVD) and 614–682 (AANA…KIIH). Thr495 carries the post-translational modification Phosphothreonine. The residue at position 498 (Ser498) is a Phosphoserine. Positions 510-519 (VEEETEENKE) are enriched in acidic residues. The span at 520-547 (DDSNNDKESTPDNDKESTIDIKISKNEN) shows a compositional bias: basic and acidic residues. A compositionally biased stretch (low complexity) spans 614–646 (AANANPDMVPQNNPQQQQQQQQQQQQQQQQQQQ). The segment covering 663 to 672 (ASDNKSSQQH) has biased composition (polar residues).

It belongs to the protein kinase superfamily. Ser/Thr protein kinase family.

It localises to the cytoplasm. The catalysed reaction is L-seryl-[protein] + ATP = O-phospho-L-seryl-[protein] + ADP + H(+). It carries out the reaction L-threonyl-[protein] + ATP = O-phospho-L-threonyl-[protein] + ADP + H(+). In terms of biological role, involved in regulating the activity of the plasma membrane proton pump PMA1. This is Serine/threonine-protein kinase HRK1 (HRK1) from Saccharomyces cerevisiae (strain ATCC 204508 / S288c) (Baker's yeast).